A 526-amino-acid chain; its full sequence is Peptide chain release factor 3 (526 aa).

The region spanning 8–277 (GKRRTFAIIS…GLTEWAPAPQ (270 aa)) is the tr-type G domain. GTP contacts are provided by residues 17 to 24 (SHPDAGKT), 85 to 89 (DTPGH), and 139 to 142 (NKMD).

Belongs to the TRAFAC class translation factor GTPase superfamily. Classic translation factor GTPase family. PrfC subfamily.

It is found in the cytoplasm. Its function is as follows. Increases the formation of ribosomal termination complexes and stimulates activities of RF-1 and RF-2. It binds guanine nucleotides and has strong preference for UGA stop codons. It may interact directly with the ribosome. The stimulation of RF-1 and RF-2 is significantly reduced by GTP and GDP, but not by GMP. The sequence is that of Peptide chain release factor 3 from Aliivibrio salmonicida (strain LFI1238) (Vibrio salmonicida (strain LFI1238)).